Consider the following 391-residue polypeptide: Transaldolase (391 aa).

The transaldolase stretch occupies residues 1–329 (MGKNLLEQLR…RLKVLDGQEH (329 aa)). Lys136 functions as the Schiff-base intermediate with substrate in the catalytic mechanism. 2 consecutive EF-hand domains span residues 329–364 (HIKH…FDAL) and 365–387 (DRDH…AFRL). Ca(2+) is bound by residues Asp342, Asp344, Asp346, Glu353, Asp365, Asp367, Asp369, Lys371, and Glu376.

Belongs to the transaldolase family. Type 1 subfamily.

The protein resides in the cytoplasm. It catalyses the reaction D-sedoheptulose 7-phosphate + D-glyceraldehyde 3-phosphate = D-erythrose 4-phosphate + beta-D-fructose 6-phosphate. It functions in the pathway carbohydrate degradation; pentose phosphate pathway; D-glyceraldehyde 3-phosphate and beta-D-fructose 6-phosphate from D-ribose 5-phosphate and D-xylulose 5-phosphate (non-oxidative stage): step 2/3. Functionally, transaldolase is important for the balance of metabolites in the pentose-phosphate pathway. The polypeptide is Transaldolase (Synechocystis sp. (strain ATCC 27184 / PCC 6803 / Kazusa)).